The sequence spans 375 residues: Queuine tRNA-ribosyltransferase (375 aa).

Aspartate 90 acts as the Proton acceptor in catalysis. Residues 90 to 94 (DSGGF), aspartate 144, glutamine 193, and glycine 220 each bind substrate. An RNA binding region spans residues 251-257 (GVGTPED). Residue aspartate 270 is the Nucleophile of the active site. The RNA binding; important for wobble base 34 recognition stretch occupies residues 275–279 (TRNAR). Residues cysteine 308, cysteine 310, cysteine 313, and histidine 339 each contribute to the Zn(2+) site.

Belongs to the queuine tRNA-ribosyltransferase family. As to quaternary structure, homodimer. Within each dimer, one monomer is responsible for RNA recognition and catalysis, while the other monomer binds to the replacement base PreQ1. It depends on Zn(2+) as a cofactor.

The catalysed reaction is 7-aminomethyl-7-carbaguanine + guanosine(34) in tRNA = 7-aminomethyl-7-carbaguanosine(34) in tRNA + guanine. The protein operates within tRNA modification; tRNA-queuosine biosynthesis. Its function is as follows. Catalyzes the base-exchange of a guanine (G) residue with the queuine precursor 7-aminomethyl-7-deazaguanine (PreQ1) at position 34 (anticodon wobble position) in tRNAs with GU(N) anticodons (tRNA-Asp, -Asn, -His and -Tyr). Catalysis occurs through a double-displacement mechanism. The nucleophile active site attacks the C1' of nucleotide 34 to detach the guanine base from the RNA, forming a covalent enzyme-RNA intermediate. The proton acceptor active site deprotonates the incoming PreQ1, allowing a nucleophilic attack on the C1' of the ribose to form the product. After dissociation, two additional enzymatic reactions on the tRNA convert PreQ1 to queuine (Q), resulting in the hypermodified nucleoside queuosine (7-(((4,5-cis-dihydroxy-2-cyclopenten-1-yl)amino)methyl)-7-deazaguanosine). This Methylibium petroleiphilum (strain ATCC BAA-1232 / LMG 22953 / PM1) protein is Queuine tRNA-ribosyltransferase.